The primary structure comprises 583 residues: Threonine--tRNA ligase (583 aa).

Residues 185 to 478 (DHRKLGRELN…LVEHYGGAFP (294 aa)) form a catalytic region. Residues Cys278, His329, and His455 each coordinate Zn(2+).

The protein belongs to the class-II aminoacyl-tRNA synthetase family. In terms of assembly, homodimer. Requires Zn(2+) as cofactor.

The protein localises to the cytoplasm. It carries out the reaction tRNA(Thr) + L-threonine + ATP = L-threonyl-tRNA(Thr) + AMP + diphosphate + H(+). Functionally, catalyzes the attachment of threonine to tRNA(Thr) in a two-step reaction: L-threonine is first activated by ATP to form Thr-AMP and then transferred to the acceptor end of tRNA(Thr). Also edits incorrectly charged L-seryl-tRNA(Thr). This Borrelia duttonii (strain Ly) protein is Threonine--tRNA ligase.